The chain runs to 454 residues: Tol-Pal system protein TolB (454 aa).

The N-terminal stretch at 1–21 is a signal peptide; the sequence is MSLRPISLMLALLLTSAPALA.

It belongs to the TolB family. As to quaternary structure, the Tol-Pal system is composed of five core proteins: the inner membrane proteins TolA, TolQ and TolR, the periplasmic protein TolB and the outer membrane protein Pal. They form a network linking the inner and outer membranes and the peptidoglycan layer.

The protein localises to the periplasm. Functionally, part of the Tol-Pal system, which plays a role in outer membrane invagination during cell division and is important for maintaining outer membrane integrity. The polypeptide is Tol-Pal system protein TolB (Sphingopyxis alaskensis (strain DSM 13593 / LMG 18877 / RB2256) (Sphingomonas alaskensis)).